The chain runs to 173 residues: Putative metal-dependent hydrolase BCE33L2441 (173 aa).

Zn(2+) is bound by residues His-65, His-156, and His-160.

Belongs to the metal hydrolase YfiT family. Homodimer. The cofactor is Zn(2+).

The protein localises to the cytoplasm. Functionally, possible metal-dependent hydrolase. This is Putative metal-dependent hydrolase BCE33L2441 from Bacillus cereus (strain ZK / E33L).